A 159-amino-acid chain; its full sequence is Large ribosomal subunit protein uL22 (159 aa).

It belongs to the universal ribosomal protein uL22 family. As to quaternary structure, part of the 50S ribosomal subunit.

Functionally, this protein binds specifically to 23S rRNA; its binding is stimulated by other ribosomal proteins, e.g. L4, L17, and L20. It is important during the early stages of 50S assembly. It makes multiple contacts with different domains of the 23S rRNA in the assembled 50S subunit and ribosome. The globular domain of the protein is located near the polypeptide exit tunnel on the outside of the subunit, while an extended beta-hairpin is found that lines the wall of the exit tunnel in the center of the 70S ribosome. This chain is Large ribosomal subunit protein uL22, found in Thermotoga sp. (strain RQ2).